The primary structure comprises 282 residues: Cell cycle checkpoint protein RAD1 (282 aa).

This sequence belongs to the rad1 family. Component of the toroidal 9-1-1 (RAD9-RAD1-HUS1) complex, composed of RAD9A, RAD1 and HUS1. The 9-1-1 complex associates with LIG1, POLB, FEN1, RAD17, HDAC1, RPA1 and RPA2. The 9-1-1 complex associates with the RAD17-RFC complex. RAD1 interacts with POLB, FEN1, HUS1, HUS1B, RAD9A and RAD9B. Interacts with DNAJC7. Interacts with RHNO1; interaction is direct. In terms of tissue distribution, expressed in testis, uterus, bladder, spleen, ovaries, lung, brain and muscle (at protein level).

The protein resides in the nucleus. Functionally, component of the 9-1-1 cell-cycle checkpoint response complex that plays a major role in DNA repair. The 9-1-1 complex is recruited to DNA lesion upon damage by the RAD17-replication factor C (RFC) clamp loader complex. Acts then as a sliding clamp platform on DNA for several proteins involved in long-patch base excision repair (LP-BER). The 9-1-1 complex stimulates DNA polymerase beta (POLB) activity by increasing its affinity for the 3'-OH end of the primer-template and stabilizes POLB to those sites where LP-BER proceeds; endonuclease FEN1 cleavage activity on substrates with double, nick, or gap flaps of distinct sequences and lengths; and DNA ligase I (LIG1) on long-patch base excision repair substrates. The 9-1-1 complex is necessary for the recruitment of RHNO1 to sites of double-stranded breaks (DSB) occurring during the S phase. The chain is Cell cycle checkpoint protein RAD1 (RAD1) from Homo sapiens (Human).